A 297-amino-acid chain; its full sequence is tRNA pseudouridine synthase B (297 aa).

The Nucleophile role is filled by aspartate 39.

The protein belongs to the pseudouridine synthase TruB family. Type 1 subfamily.

The catalysed reaction is uridine(55) in tRNA = pseudouridine(55) in tRNA. Responsible for synthesis of pseudouridine from uracil-55 in the psi GC loop of transfer RNAs. The polypeptide is tRNA pseudouridine synthase B (Lactobacillus acidophilus (strain ATCC 700396 / NCK56 / N2 / NCFM)).